A 103-amino-acid chain; its full sequence is Large ribosomal subunit protein bL21 (103 aa).

It belongs to the bacterial ribosomal protein bL21 family. In terms of assembly, part of the 50S ribosomal subunit. Contacts protein L20.

Functionally, this protein binds to 23S rRNA in the presence of protein L20. The sequence is that of Large ribosomal subunit protein bL21 from Shewanella frigidimarina (strain NCIMB 400).